The sequence spans 239 residues: Small ribosomal subunit protein uS2 (239 aa).

Belongs to the universal ribosomal protein uS2 family.

The polypeptide is Small ribosomal subunit protein uS2 (Francisella tularensis subsp. tularensis (strain FSC 198)).